Here is a 570-residue protein sequence, read N- to C-terminus: Apyrase (570 aa).

The N-terminal stretch at 1-23 (MALVRFATIITVLCHLAIQDGAA) is a signal peptide. Positions 43, 45, and 94 each coordinate a divalent metal cation. N108 is a glycosylation site (N-linked (GlcNAc...) asparagine). 3 residues coordinate a divalent metal cation: N126, H229, and H253. N-linked (GlcNAc...) asparagine glycosylation is found at N287 and N326. R367 lines the AMP pocket. N387 carries N-linked (GlcNAc...) asparagine glycosylation. The AMP site is built by R402 and D507. N-linked (GlcNAc...) asparagine glycans are attached at residues N552 and N555.

The protein belongs to the 5'-nucleotidase family. As to quaternary structure, interacts with human PLAT; the interaction results in PLAT activation probably via an allosteric activation mechanism. The cofactor is a divalent metal cation. As to expression, saliva (at protein level). Salivary gland (at protein level). Not detected in midgut.

The protein localises to the secreted. It catalyses the reaction a ribonucleoside 5'-triphosphate + 2 H2O = a ribonucleoside 5'-phosphate + 2 phosphate + 2 H(+). Functionally, cleaves adenosine triphosphate (ATP) and adenosine diphosphate (ADP) to adenosine monophosphate (AMP) and inorganic phosphate. Enhances fibrin degradation in the midgut blood bolus. Activates human tissue plasminogen activator (PLAT), probably via an allosteric activation mechanism. Inhibits ADP-mediated host platelet aggregation in vitro and in mosquito midgut. Inhibits host neutrophil activation in the mosquito midgut: reduces neutrophil extracellular traps formation in the presence of platelets and the formation of total cell- and mitochondrial-derived reactive oxygen species. In terms of biological role, (Microbial infection) Promotes Plasmodium berghei parasite transmission from the mammalian host to the mosquito probably by reducing the blood bolus viscosity. Facilitates sporozoite transmission from the mosquito to the mammalian host during blood feeding. The polypeptide is Apyrase (Anopheles gambiae (African malaria mosquito)).